We begin with the raw amino-acid sequence, 458 residues long: Phosphoglucosamine mutase (458 aa).

Residue Ser108 is the Phosphoserine intermediate of the active site. Ser108, Asp247, Asp249, and Asp251 together coordinate Mg(2+). Ser108 carries the phosphoserine modification.

Belongs to the phosphohexose mutase family. It depends on Mg(2+) as a cofactor. Post-translationally, activated by phosphorylation.

It catalyses the reaction alpha-D-glucosamine 1-phosphate = D-glucosamine 6-phosphate. Its function is as follows. Catalyzes the conversion of glucosamine-6-phosphate to glucosamine-1-phosphate. The protein is Phosphoglucosamine mutase of Nitrosomonas eutropha (strain DSM 101675 / C91 / Nm57).